The sequence spans 371 residues: MASSNLLVLLLFALFAIPRGLANYDKPPVYQPPVYKPPVEKPPVYKPPVEKPPVYKPPVEKPPVYKPPVEKPPVYKPPVEKPPVYKPPVEKPPVYKPPVEKPPVYKPPVEKPPVYKPPVEKPPVYKPPVEKPPVYKPPVEKPPVYKPPVEKPPVYKPPVEKPPVYKPPVEKPPVYKPPVEKPPVYKPPVEKPPVYKPPVEKPPVYKPPVEKPPVYKPPVEKPPVYKPPVEKPPIYKPPVEKPPVYKPPVEKPPVYKPPVEKPPIYKPPVEKPPVYKPPVEKPPVYKPPVEKPPVYKPPVEKPPVYKPPVEKPPVYKPPVYKPPVYKPPVEKPPVYKPPVYKPPVEKPPVYKPPVYKPPVEKPPVYGPPHHP.

The N-terminal stretch at Met-1 to Ala-22 is a signal peptide. 66 repeat units span residues Pro-32 to Lys-36, Pro-37 to Lys-41, Pro-42 to Lys-46, Pro-47 to Lys-51, Pro-52 to Lys-56, Pro-57 to Lys-61, Pro-62 to Lys-66, Pro-67 to Lys-71, Pro-72 to Lys-76, Pro-77 to Lys-81, Pro-82 to Lys-86, Pro-87 to Lys-91, Pro-92 to Lys-96, Pro-97 to Lys-101, Pro-102 to Lys-106, Pro-107 to Lys-111, Pro-112 to Lys-116, Pro-117 to Lys-121, Pro-122 to Lys-126, Pro-127 to Lys-131, Pro-132 to Lys-136, Pro-137 to Lys-141, Pro-142 to Lys-146, Pro-147 to Lys-151, Pro-152 to Lys-156, Pro-157 to Lys-161, Pro-162 to Lys-166, Pro-167 to Lys-171, Pro-172 to Lys-176, Pro-177 to Lys-181, Pro-182 to Lys-186, Pro-187 to Lys-191, Pro-192 to Lys-196, Pro-197 to Lys-201, Pro-202 to Lys-206, Pro-207 to Lys-211, Pro-212 to Lys-216, Pro-217 to Lys-221, Pro-222 to Lys-226, Pro-227 to Lys-231, Pro-232 to Lys-236, Pro-237 to Lys-241, Pro-242 to Lys-246, Pro-247 to Lys-251, Pro-252 to Lys-256, Pro-257 to Lys-261, Pro-262 to Lys-266, Pro-267 to Lys-271, Pro-272 to Lys-276, Pro-277 to Lys-281, Pro-282 to Lys-286, Pro-287 to Lys-291, Pro-292 to Lys-296, Pro-297 to Lys-301, Pro-302 to Lys-306, Pro-307 to Lys-311, Pro-312 to Lys-316, Pro-317 to Lys-321, Pro-322 to Lys-326, Pro-327 to Lys-331, Pro-332 to Lys-336, Pro-337 to Lys-341, Pro-342 to Lys-346, Pro-347 to Lys-351, Pro-352 to Lys-356, and Pro-357 to Lys-361. A 67 X 5 AA approximate tandem repeats of P-P-[IV]-[EY]-K region spans residues Pro-32–Gly-366. A disordered region spans residues Val-49–Pro-317. A disordered region spans residues Val-339–Pro-371. One copy of the 67; approximate repeat lies at Pro-362 to Gly-366.

Belongs to the plant proline-rich protein superfamily. ENOD12 family. Expressed in hypocotyls, roots and mature root nodules.

It is found in the secreted. It localises to the cell wall. Its function is as follows. This is a developmentally regulated putative cell wall protein. In Medicago truncatula (Barrel medic), this protein is Repetitive proline-rich cell wall protein 2 (PRP2).